A 227-amino-acid polypeptide reads, in one-letter code: Cytochrome c oxidase subunit 2 (227 aa).

Over 1-14 (MAYPMQLGFQDATS) the chain is Mitochondrial intermembrane. A helical membrane pass occupies residues 15–45 (PIMEELLHFHDHTLMIVFLISSLVLYIISLM). Residues 46-59 (LTTKLTHTSTMDAQ) are Mitochondrial matrix-facing. The chain crosses the membrane as a helical span at residues 60–87 (EVETIWTILPAIILILIALPSLRILYMM). Residues 88–227 (DEINNPSLTV…YFEKWSASML (140 aa)) lie on the Mitochondrial intermembrane side of the membrane. The Cu cation site is built by histidine 161, cysteine 196, glutamate 198, cysteine 200, histidine 204, and methionine 207. Glutamate 198 contacts Mg(2+). Tyrosine 218 bears the Phosphotyrosine mark.

Belongs to the cytochrome c oxidase subunit 2 family. As to quaternary structure, component of the cytochrome c oxidase (complex IV, CIV), a multisubunit enzyme composed of 14 subunits. The complex is composed of a catalytic core of 3 subunits MT-CO1, MT-CO2 and MT-CO3, encoded in the mitochondrial DNA, and 11 supernumerary subunits COX4I, COX5A, COX5B, COX6A, COX6B, COX6C, COX7A, COX7B, COX7C, COX8 and NDUFA4, which are encoded in the nuclear genome. The complex exists as a monomer or a dimer and forms supercomplexes (SCs) in the inner mitochondrial membrane with NADH-ubiquinone oxidoreductase (complex I, CI) and ubiquinol-cytochrome c oxidoreductase (cytochrome b-c1 complex, complex III, CIII), resulting in different assemblies (supercomplex SCI(1)III(2)IV(1) and megacomplex MCI(2)III(2)IV(2)). Found in a complex with TMEM177, COA6, COX18, COX20, SCO1 and SCO2. Interacts with TMEM177 in a COX20-dependent manner. Interacts with COX20. Interacts with COX16. Requires Cu cation as cofactor.

The protein localises to the mitochondrion inner membrane. It carries out the reaction 4 Fe(II)-[cytochrome c] + O2 + 8 H(+)(in) = 4 Fe(III)-[cytochrome c] + 2 H2O + 4 H(+)(out). Its function is as follows. Component of the cytochrome c oxidase, the last enzyme in the mitochondrial electron transport chain which drives oxidative phosphorylation. The respiratory chain contains 3 multisubunit complexes succinate dehydrogenase (complex II, CII), ubiquinol-cytochrome c oxidoreductase (cytochrome b-c1 complex, complex III, CIII) and cytochrome c oxidase (complex IV, CIV), that cooperate to transfer electrons derived from NADH and succinate to molecular oxygen, creating an electrochemical gradient over the inner membrane that drives transmembrane transport and the ATP synthase. Cytochrome c oxidase is the component of the respiratory chain that catalyzes the reduction of oxygen to water. Electrons originating from reduced cytochrome c in the intermembrane space (IMS) are transferred via the dinuclear copper A center (CU(A)) of subunit 2 and heme A of subunit 1 to the active site in subunit 1, a binuclear center (BNC) formed by heme A3 and copper B (CU(B)). The BNC reduces molecular oxygen to 2 water molecules using 4 electrons from cytochrome c in the IMS and 4 protons from the mitochondrial matrix. The polypeptide is Cytochrome c oxidase subunit 2 (MT-CO2) (Boselaphus tragocamelus (Nilgai)).